A 347-amino-acid chain; its full sequence is Tetraacyldisaccharide 4'-kinase (347 aa).

Position 64–71 (Y64–T71) interacts with ATP.

The protein belongs to the LpxK family.

The catalysed reaction is a lipid A disaccharide + ATP = a lipid IVA + ADP + H(+). It functions in the pathway glycolipid biosynthesis; lipid IV(A) biosynthesis; lipid IV(A) from (3R)-3-hydroxytetradecanoyl-[acyl-carrier-protein] and UDP-N-acetyl-alpha-D-glucosamine: step 6/6. Transfers the gamma-phosphate of ATP to the 4'-position of a tetraacyldisaccharide 1-phosphate intermediate (termed DS-1-P) to form tetraacyldisaccharide 1,4'-bis-phosphate (lipid IVA). This is Tetraacyldisaccharide 4'-kinase from Bordetella bronchiseptica (strain ATCC BAA-588 / NCTC 13252 / RB50) (Alcaligenes bronchisepticus).